The chain runs to 231 residues: Ion-translocating oxidoreductase complex subunit E (231 aa).

6 helical membrane passes run 18-38 (ALVQLLGLCPLLAVTSTATNA), 39-59 (LGLGLATTLVLTLTNLTISTL), 63-83 (TPAEIRIPIYVMIIASVVSAV), 86-106 (LINAYAFGLYQSLGIFIPLIV), 125-145 (ALSALDGFSIGMGATCAMFVL), and 182-202 (PFLLAMLPPGAFIGLGLMLAG).

This sequence belongs to the NqrDE/RnfAE family. In terms of assembly, the complex is composed of six subunits: RsxA, RsxB, RsxC, RsxD, RsxE and RsxG.

The protein resides in the cell inner membrane. Functionally, part of a membrane-bound complex that couples electron transfer with translocation of ions across the membrane. Required to maintain the reduced state of SoxR. The chain is Ion-translocating oxidoreductase complex subunit E from Shigella boydii serotype 18 (strain CDC 3083-94 / BS512).